The sequence spans 462 residues: Argininosuccinate lyase (462 aa).

It belongs to the lyase 1 family. Argininosuccinate lyase subfamily.

It localises to the cytoplasm. It catalyses the reaction 2-(N(omega)-L-arginino)succinate = fumarate + L-arginine. It functions in the pathway amino-acid biosynthesis; L-arginine biosynthesis; L-arginine from L-ornithine and carbamoyl phosphate: step 3/3. In Thermus thermophilus (strain ATCC BAA-163 / DSM 7039 / HB27), this protein is Argininosuccinate lyase.